Reading from the N-terminus, the 301-residue chain is HPr kinase/phosphorylase (301 aa).

Active-site residues include H134 and K155. An ATP-binding site is contributed by 149 to 156 (GKSGLGKS). S156 contributes to the Mg(2+) binding site. D173 functions as the Proton acceptor; for phosphorylation activity. Proton donor; for dephosphorylation activity in the catalytic mechanism. An important for the catalytic mechanism of both phosphorylation and dephosphorylation region spans residues 196–205 (LEVRGLGIIN). E197 is a binding site for Mg(2+). Residue R239 is part of the active site. The important for the catalytic mechanism of dephosphorylation stretch occupies residues 260–265 (PITPGK).

The protein belongs to the HPrK/P family. In terms of assembly, homohexamer. The cofactor is Mg(2+).

It catalyses the reaction [HPr protein]-L-serine + ATP = [HPr protein]-O-phospho-L-serine + ADP + H(+). The catalysed reaction is [HPr protein]-O-phospho-L-serine + phosphate + H(+) = [HPr protein]-L-serine + diphosphate. Functionally, catalyzes the ATP- as well as the pyrophosphate-dependent phosphorylation of a specific serine residue in HPr, a phosphocarrier protein of the phosphoenolpyruvate-dependent sugar phosphotransferase system (PTS). HprK/P also catalyzes the pyrophosphate-producing, inorganic phosphate-dependent dephosphorylation (phosphorolysis) of seryl-phosphorylated HPr (P-Ser-HPr). The two antagonistic activities of HprK/P are regulated by several intracellular metabolites, which change their concentration in response to the absence or presence of rapidly metabolisable carbon sources (glucose, fructose, etc.) in the growth medium. Therefore, by controlling the phosphorylation state of HPr, HPrK/P is a sensor enzyme that plays a major role in the regulation of carbon metabolism and sugar transport: it mediates carbon catabolite repression (CCR), and regulates PTS-catalyzed carbohydrate uptake and inducer exclusion. The sequence is that of HPr kinase/phosphorylase from Malacoplasma penetrans (strain HF-2) (Mycoplasma penetrans).